The primary structure comprises 206 residues: Recombination protein RecR (206 aa).

The segment at 60–75 adopts a C4-type zinc-finger fold; the sequence is CARCNTFCEGGLCDIC. Positions 83 to 178 constitute a Toprim domain; the sequence is RRLMVVHMPA…KVSRLSQGIP (96 aa).

This sequence belongs to the RecR family.

Functionally, may play a role in DNA repair. It seems to be involved in an RecBC-independent recombinational process of DNA repair. It may act with RecF and RecO. The sequence is that of Recombination protein RecR from Neisseria gonorrhoeae (strain NCCP11945).